The following is a 258-amino-acid chain: Glucosamine-6-phosphate deaminase (258 aa).

The Proton acceptor; for enolization step role is filled by Asp65. The active-site For ring-opening step is the Asp134. Catalysis depends on His136, which acts as the Proton acceptor; for ring-opening step. Residue Glu141 is the For ring-opening step of the active site.

Belongs to the glucosamine/galactosamine-6-phosphate isomerase family. NagB subfamily.

It catalyses the reaction alpha-D-glucosamine 6-phosphate + H2O = beta-D-fructose 6-phosphate + NH4(+). The protein operates within amino-sugar metabolism; N-acetylneuraminate degradation; D-fructose 6-phosphate from N-acetylneuraminate: step 5/5. Functionally, catalyzes the reversible isomerization-deamination of glucosamine 6-phosphate (GlcN6P) to form fructose 6-phosphate (Fru6P) and ammonium ion. In Corynebacterium kroppenstedtii (strain DSM 44385 / JCM 11950 / CIP 105744 / CCUG 35717), this protein is Glucosamine-6-phosphate deaminase.